The following is an 883-amino-acid chain: Probable pre-mRNA-splicing factor ATP-dependent RNA helicase DEAH8 (883 aa).

Residues 232-395 (LKLIEENQVL…FDSARIYLIP (164 aa)) form the Helicase ATP-binding domain. 245–252 (GETGSGKT) serves as a coordination point for ATP. The short motif at 342-345 (DEAH) is the DEAH box element. The Helicase C-terminal domain occupies 416 to 589 (TVIRTVVQIH…SVVLTLKSLG (174 aa)). The interval 845 to 883 (EDTRPKKTQRRIEEASTSKVDTNKKTRTSKVDTNKKSKR) is disordered.

The protein belongs to the DEAD box helicase family. DEAH subfamily. PRP2 sub-subfamily. In terms of tissue distribution, predominantly expressed in flowers.

It carries out the reaction ATP + H2O = ADP + phosphate + H(+). Its function is as follows. May be involved in pre-mRNA splicing. In Arabidopsis thaliana (Mouse-ear cress), this protein is Probable pre-mRNA-splicing factor ATP-dependent RNA helicase DEAH8.